We begin with the raw amino-acid sequence, 159 residues long: Small ribosomal subunit protein uS9 (159 aa).

The protein belongs to the universal ribosomal protein uS9 family.

The polypeptide is Small ribosomal subunit protein uS9 (Rickettsia massiliae (strain Mtu5)).